The primary structure comprises 528 residues: Probable histone-arginine methyltransferase 1.4 (528 aa).

M1 bears the N-acetylmethionine mark. The SAM-dependent MTase PRMT-type domain occupies 144–459 (EAASAKMYFH…QSYTINLTLS (316 aa)). Positions 161, 170, 194, 216, and 246 each coordinate S-adenosyl-L-methionine. Residues E260 and E269 contribute to the active site. T274 is a binding site for S-adenosyl-L-methionine.

Belongs to the class I-like SAM-binding methyltransferase superfamily. Protein arginine N-methyltransferase family.

The protein resides in the nucleus. It is found in the cytoplasm. It catalyses the reaction L-arginyl-[protein] + 2 S-adenosyl-L-methionine = N(omega),N(omega)-dimethyl-L-arginyl-[protein] + 2 S-adenosyl-L-homocysteine + 2 H(+). In terms of biological role, methylates (mono- and asymmetric dimethylation) the guanidino nitrogens of arginyl residues in several proteins involved in DNA packaging, transcription regulation, and mRNA stability. Recruited to promoters upon gene activation, methylates histone H3 and activates transcription via chromatin remodeling. This chain is Probable histone-arginine methyltransferase 1.4 (PRMT14), found in Arabidopsis thaliana (Mouse-ear cress).